The following is a 147-amino-acid chain: Siroheme decarboxylase NirG subunit (147 aa).

This sequence belongs to the Ahb/Nir family. Probably forms a complex composed of NirD, NirL, NirG and NirH. All proteins are required for the total conversion of siroheme to didecarboxysiroheme.

It carries out the reaction siroheme + 2 H(+) = 12,18-didecarboxysiroheme + 2 CO2. The protein operates within porphyrin-containing compound metabolism. In terms of biological role, involved in heme d1 biosynthesis. Catalyzes the decarboxylation of siroheme into didecarboxysiroheme. This is Siroheme decarboxylase NirG subunit from Pseudomonas aeruginosa (strain ATCC 15692 / DSM 22644 / CIP 104116 / JCM 14847 / LMG 12228 / 1C / PRS 101 / PAO1).